The sequence spans 276 residues: Anthranilate synthase beta subunit 1, chloroplastic (276 aa).

A chloroplast-targeting transit peptide spans 1–50; it reads MAASTLYKSCLLQPKSGSTTRRLNPSLVNPLTNPTRVSVLGKSRRDVFAK. Residues 74 to 273 enclose the Glutamine amidotransferase type-1 domain; that stretch reads PIIVIDNYDS…IKIVEKKESE (200 aa). C152 (nucleophile) is an active-site residue. Residues H247 and E249 contribute to the active site.

As to quaternary structure, heterotetramer consisting of two non-identical subunits: a beta subunit and a large alpha subunit. Expressed in the central cylinder of mature primary root zones, including pericycle and early lateral root primordia, and vasculature of cotyledons.

Its subcellular location is the plastid. The protein localises to the chloroplast. It carries out the reaction chorismate + L-glutamine = anthranilate + pyruvate + L-glutamate + H(+). It functions in the pathway amino-acid biosynthesis; L-tryptophan biosynthesis; L-tryptophan from chorismate: step 1/5. Functionally, part of a heterotetrameric complex that catalyzes the two-step biosynthesis of anthranilate, an intermediate in the biosynthesis of L-tryptophan. In the first step, the glutamine-binding beta subunit of anthranilate synthase (AS) provides the glutamine amidotransferase activity which generates ammonia as a substrate that, along with chorismate, is used in the second step, catalyzed by the large alpha subunit of AS to produce anthranilate. Plays an important regulatory role in auxin production via the tryptophan-dependent biosynthetic pathway. This chain is Anthranilate synthase beta subunit 1, chloroplastic (ASB1), found in Arabidopsis thaliana (Mouse-ear cress).